The sequence spans 653 residues: Rab proteins geranylgeranyltransferase component A 1 (653 aa).

The interval 606–653 (PPPPNPEDIILDGDSLQPEASESSAIPEANSETFKESTNLGNLEESSE) is disordered. Residues 623 to 646 (PEASESSAIPEANSETFKESTNLG) are compositionally biased toward polar residues.

It belongs to the Rab GDI family. Monomer. Heterotrimer composed of RABGGTA, RABGGTB and CHM; within this trimer, RABGGTA and RABGGTB form the catalytic component B, while CHM (component A) mediates Rab protein binding. Can associate with the Rab GGTase dimer (RGGT or component B) prior to Rab protein binding; the association is stabilized by geranylgeranyl pyrophosphate (GGpp). The CHM:RGGT:Rab complex is destabilized by GGpp. Interacts with RAB1A, RAB1B, RAB5A, RAB7A and RAB27A and mediates their prenylation. Interacts with the non-phosphorylated forms of RAB3A, RAB3B, RAB3C, RAB3D, RAB5B, RAB5C, RAB8A, RAB8B, RAB10, RAB12, RAB35, and RAB43.

Its subcellular location is the cytoplasm. It is found in the cytosol. In terms of biological role, substrate-binding subunit of the Rab geranylgeranyltransferase (GGTase) complex. Binds unprenylated Rab proteins and presents the substrate peptide to the catalytic component B composed of RABGGTA and RABGGTB, and remains bound to it after the geranylgeranyl transfer reaction. The component A is thought to be regenerated by transferring its prenylated Rab back to the donor membrane. Besides, a pre-formed complex consisting of CHM and the Rab GGTase dimer (RGGT or component B) can bind to and prenylate Rab proteins; this alternative pathway is proposed to be the predominant pathway for Rab protein geranylgeranylation. This Homo sapiens (Human) protein is Rab proteins geranylgeranyltransferase component A 1 (CHM).